Reading from the N-terminus, the 324-residue chain is dITP/XTP pyrophosphatase (324 aa).

The tract at residues 1-126 (MTKSIFEYKD…SDNKSDFGDV (126 aa)) is unknown. The interval 127-324 (LLIATRNEGK…EVFPAWQNKQ (198 aa)) is NTP pyrophosphatase. 131-136 (TRNEGK) contributes to the substrate binding site. Catalysis depends on D193, which acts as the Proton acceptor. D193 serves as a coordination point for Mg(2+). Substrate-binding positions include S194, 277-280 (FGYD), K300, and 305-306 (HR).

This sequence belongs to the HAM1 NTPase family. In terms of assembly, homodimer. It depends on Mg(2+) as a cofactor.

The catalysed reaction is XTP + H2O = XMP + diphosphate + H(+). The enzyme catalyses dITP + H2O = dIMP + diphosphate + H(+). It catalyses the reaction ITP + H2O = IMP + diphosphate + H(+). Its function is as follows. Pyrophosphatase that catalyzes the hydrolysis of nucleoside triphosphates to their monophosphate derivatives, with a high preference for the non-canonical purine nucleotides XTP (xanthosine triphosphate), dITP (deoxyinosine triphosphate) and ITP. Seems to function as a house-cleaning enzyme that removes non-canonical purine nucleotides from the nucleotide pool, thus preventing their incorporation into DNA/RNA and avoiding chromosomal lesions. This Streptococcus thermophilus (strain CNRZ 1066) protein is dITP/XTP pyrophosphatase.